Reading from the N-terminus, the 318-residue chain is Pseudouridine-5'-phosphate glycosidase 1 (318 aa).

The active-site Proton donor is the Glu-29. Residues Lys-90 and Val-110 each contribute to the substrate site. Asp-142 provides a ligand contact to Mn(2+). 144–146 (SAD) is a substrate binding site. Lys-163 functions as the Nucleophile in the catalytic mechanism.

It belongs to the pseudouridine-5'-phosphate glycosidase family. In terms of assembly, homotrimer. The cofactor is Mn(2+).

It catalyses the reaction D-ribose 5-phosphate + uracil = psi-UMP + H2O. Its function is as follows. Catalyzes the reversible cleavage of pseudouridine 5'-phosphate (PsiMP) to ribose 5-phosphate and uracil. Functions biologically in the cleavage direction, as part of a pseudouridine degradation pathway. This Photorhabdus laumondii subsp. laumondii (strain DSM 15139 / CIP 105565 / TT01) (Photorhabdus luminescens subsp. laumondii) protein is Pseudouridine-5'-phosphate glycosidase 1.